Reading from the N-terminus, the 86-residue chain is Acyl carrier protein (86 aa).

Residues 2 to 82 (ATVFERVKKV…AVVDYLKSKG (81 aa)) enclose the Carrier domain. Ser37 is subject to O-(pantetheine 4'-phosphoryl)serine.

The protein belongs to the acyl carrier protein (ACP) family. Post-translationally, 4'-phosphopantetheine is transferred from CoA to a specific serine of apo-ACP by AcpS. This modification is essential for activity because fatty acids are bound in thioester linkage to the sulfhydryl of the prosthetic group.

It localises to the cytoplasm. It participates in lipid metabolism; fatty acid biosynthesis. Functionally, carrier of the growing fatty acid chain in fatty acid biosynthesis. The chain is Acyl carrier protein from Dehalococcoides mccartyi (strain ATCC BAA-2100 / JCM 16839 / KCTC 5957 / BAV1).